A 445-amino-acid polypeptide reads, in one-letter code: MQENYKAKAYDILKNLNIEEGDLIEIKKGDLRIRGILLPSYSKDERIFVIKLDNGYNIGISIDNISEIKLITKNSSKAQESERKEVSRNGAKSEIKIISTGGTIVSKVEYETGAVRPALTTEEIVQFLPEINEIAKVDAEVLFSILSENMKPEYWVKIAESVKKAFGEGNTGVVIAHGTDTMAYTASALAFSLRSLQGPVVLVGSQRSSDRPSSDSAINLLSAVTTAKYAPFGEVVVNMHADSSDTYALVHRGVKVRKMHSSRRDAFQSVNDKPLAKVLWKERKLVMLDKSYMSKKGETTLDAKFDNRAFLLYYYPGLDRDFLEHILTNTKIRGLIIAGTGLGHTSSDYVELFRKATKDGIFIGMTTQCLFGRVNMNVYTTGRQLLDAGVTPLEDMLPEVALVKLMWVLAHEQDLEKIRSLMISNLVGEINPRHTLDLFPRWSYE.

Residues 93 to 425 (SEIKIISTGG…EKIRSLMISN (333 aa)) enclose the Asparaginase/glutaminase domain. Residues Thr-103, Thr-179, Asp-180, and Lys-258 contribute to the active site.

It belongs to the asparaginase 1 family. GatD subfamily. As to quaternary structure, heterodimer of GatD and GatE.

It catalyses the reaction L-glutamyl-tRNA(Gln) + L-glutamine + ATP + H2O = L-glutaminyl-tRNA(Gln) + L-glutamate + ADP + phosphate + H(+). Allows the formation of correctly charged Gln-tRNA(Gln) through the transamidation of misacylated Glu-tRNA(Gln) in organisms which lack glutaminyl-tRNA synthetase. The reaction takes place in the presence of glutamine and ATP through an activated gamma-phospho-Glu-tRNA(Gln). The GatDE system is specific for glutamate and does not act on aspartate. This is Glutamyl-tRNA(Gln) amidotransferase subunit D from Saccharolobus islandicus (strain L.S.2.15 / Lassen #1) (Sulfolobus islandicus).